The chain runs to 498 residues: Flavin-dependent halogenase otaD (498 aa).

Residues Gly14, Gly17, and Glu47 each contribute to the FAD site. The chloride site is built by Ser326 and Gly327. FAD is bound at residue Val328.

It belongs to the flavin-dependent halogenase family.

It catalyses the reaction ochratoxin B + FADH2 + chloride + O2 = ochratoxin A + FAD + 2 H2O. It participates in mycotoxin biosynthesis. Its function is as follows. Flavin-dependent halogenase; part of the gene cluster that mediates the biosynthesis of ochratoxin A (OTA), a mycotoxin composed of a chlorinated type I polyketide dihydroisocoumarin moiety linked to L-phenylalanine, and demonstrated to have nephrotoxic, immunotoxic, genotoxic, neurotoxic, and teratogenic properties. OtaD chlorinates ochratoxin B (OTB) at the C-5 position to form OTA. The pathway begins with the highly reducing polyketide synthase otaA that catalyzes the formation of the isocoumarin group during the initial stages of biosynthesis, starting from one acetate and 4 malonate units, to originate the characteristic pentaketide skeleton 7-methylmellein (7-MM) of the OTA molecule. The newly identified cyclase otaY might be involved in the polyketide cyclization reaction during the initial steps of the OTA biosynthesis. 7-MM is then oxidized into 7-carboxymellein (also called ochratoxin beta) by the cytochrome P450 monooxygenase otaC. The NRPS encoded by the otaB gene is involved in the linking of phenylalanine to the dihydroisocoumarin ring. The reaction catalyzed by NRPS results in the production of ochratoxin B (OTB), which is the non-chlorinated analog of OTA and which subsequently serves as the substrate of the halogenase otaD for chlorination activity to form the final molecular structure of OTA, containing a chlorine atom in the C-5 position of the molecule. The chain is Flavin-dependent halogenase otaD from Aspergillus carbonarius (strain ITEM 5010).